A 236-amino-acid polypeptide reads, in one-letter code: Adenosine 5'-phosphosulfate reductase 2 (236 aa).

[4Fe-4S] cluster-binding residues include cysteine 122, cysteine 123, cysteine 205, and cysteine 208. The disordered stretch occupies residues 216–236 (NDERAGRWAGREKTECGLHQE). Cysteine 231 (nucleophile; cysteine thiosulfonate intermediate) is an active-site residue.

Belongs to the PAPS reductase family. CysH subfamily. The cofactor is [4Fe-4S] cluster.

Its subcellular location is the cytoplasm. The enzyme catalyses [thioredoxin]-disulfide + sulfite + AMP + 2 H(+) = adenosine 5'-phosphosulfate + [thioredoxin]-dithiol. The protein operates within sulfur metabolism; hydrogen sulfide biosynthesis; sulfite from sulfate. Functionally, catalyzes the formation of sulfite from adenosine 5'-phosphosulfate (APS) using thioredoxin as an electron donor. In Bacillus subtilis (strain 168), this protein is Adenosine 5'-phosphosulfate reductase 2.